Here is a 317-residue protein sequence, read N- to C-terminus: Ribose-phosphate pyrophosphokinase (317 aa).

Residues 43 to 45 (DGE) and 102 to 103 (RQ) contribute to the ATP site. Mg(2+)-binding residues include histidine 136 and aspartate 175. Lysine 198 is a catalytic residue. D-ribose 5-phosphate-binding positions include arginine 200, aspartate 224, and 228 to 232 (DTAGT).

The protein belongs to the ribose-phosphate pyrophosphokinase family. Class I subfamily. Homohexamer. Requires Mg(2+) as cofactor.

Its subcellular location is the cytoplasm. It carries out the reaction D-ribose 5-phosphate + ATP = 5-phospho-alpha-D-ribose 1-diphosphate + AMP + H(+). The protein operates within metabolic intermediate biosynthesis; 5-phospho-alpha-D-ribose 1-diphosphate biosynthesis; 5-phospho-alpha-D-ribose 1-diphosphate from D-ribose 5-phosphate (route I): step 1/1. Functionally, involved in the biosynthesis of the central metabolite phospho-alpha-D-ribosyl-1-pyrophosphate (PRPP) via the transfer of pyrophosphoryl group from ATP to 1-hydroxyl of ribose-5-phosphate (Rib-5-P). This is Ribose-phosphate pyrophosphokinase from Oceanobacillus iheyensis (strain DSM 14371 / CIP 107618 / JCM 11309 / KCTC 3954 / HTE831).